Here is a 266-residue protein sequence, read N- to C-terminus: Probable carboxylesterase Os04g0669500 (266 aa).

Active-site charge relay system residues include Ser154, Asp208, and His240.

It belongs to the AB hydrolase superfamily. AB hydrolase 2 family.

In terms of biological role, possesses carboxylesterase activity in vitro. This Oryza sativa subsp. japonica (Rice) protein is Probable carboxylesterase Os04g0669500.